Reading from the N-terminus, the 490-residue chain is Colicin-10 (490 aa).

Polar residues predominate over residues 1 to 20; the sequence is MDKVTDNSPDVESTESTEGS. Disordered regions lie at residues 1–29 and 146–171; these read MDKVTDNSPDVESTESTEGSFPTVGVDTG and QKAREEAEAAEKALREAERQRDEIAR. The segment covering 146–170 has biased composition (basic and acidic residues); sequence QKAREEAEAAEKALREAERQRDEIA. A helical transmembrane segment spans residues 447–467; the sequence is IVALMFSFIVGAPLGFWGIAI.

This sequence belongs to the channel forming colicin family.

The protein localises to the host membrane. Functionally, this colicin is a channel-forming colicin. This class of transmembrane toxins depolarize the cytoplasmic membrane, leading to dissipation of cellular energy. In terms of biological role, colicins are polypeptide toxins produced by and active against E.coli and closely related bacteria. The chain is Colicin-10 (cta) from Escherichia coli.